Consider the following 388-residue polypeptide: 3beta-hydroxysteroid dehydrogenase dhs-16 (388 aa).

The chain crosses the membrane as a helical span at residues 2-22; sequence LELIYILPLLCFVYFLFRRFV. Catalysis depends on tyrosine 188, which acts as the Proton acceptor. Transmembrane regions (helical) follow at residues 300–320 and 346–366; these read AIFM…WILA and IQWI…TIFF.

The protein belongs to the short-chain dehydrogenases/reductases (SDR) family. In terms of tissue distribution, strongly expressed in the hypodermis and posterior pharyngeal bulb and in a number of unidentified neurons of the head and tail.

The protein resides in the membrane. The catalysed reaction is lathosterol + NAD(+) = 5alpha-cholest-7-en-3-one + NADH + H(+). It functions in the pathway steroid hormone biosynthesis; dafachronic acid biosynthesis. 3beta-hydroxysteroid dehydrogenase that converts 3beta-hydroxysteroids to 3-ketosteroids, an essential step in the production of dafachronic acids from cholesterol. Catalyzes the dehydrogenation of lathosterol (5alpha-cholest-7-en-3beta-ol) to lathosterone (5alpha-cholest-7-en-3-one), a step required for maximal biosynthesis of Delta(7)-dafachronic acid. Dafachronic acids act as ligands and bind directly to the nuclear hormone receptor (NHR) daf-12, suppressing dauer formation and inducing reproductive growth, they can also regulate C.elegans lifespan. The polypeptide is 3beta-hydroxysteroid dehydrogenase dhs-16 (dhs-16) (Caenorhabditis elegans).